The following is a 280-amino-acid chain: Soluble inorganic pyrophosphatase 1, chloroplastic (280 aa).

Diphosphate is bound at residue R120. Mg(2+)-binding residues include D152, D157, and D189.

In terms of assembly, monomer. Mg(2+) serves as cofactor. Post-translationally, the N-terminus is blocked.

It is found in the plastid. The protein resides in the chloroplast. The enzyme catalyses diphosphate + H2O = 2 phosphate + H(+). The chain is Soluble inorganic pyrophosphatase 1, chloroplastic (ppa1) from Chlamydomonas reinhardtii (Chlamydomonas smithii).